The chain runs to 419 residues: MKVAVIGSGGREHTLAWSLVRSPEVSHCYCLPGNGGTAGLPKTENVAIAVDQLGEICEFCQTEKINLVVVGPELPLTLGLTDQLQALGIKVFGPTKAGAELEASKSWTKQLLIEAGVPTAFGETFTEPAPAQAYATKMGAPIVVKADGLAAGKGVIVAQTSAEATTAIAELFDQGFEKIVVEEFLPGEEVSVLALCDGKTVIPLLPAQDHKRIGEGDQGLNTGGMGAYCPAPIAPPAVIDQVQKQILQPTANALAKRGIDYRGVLYAGLMVSPTGEIKVLEYNCRFGDPETQAVLPLLATPLEKVLMACVEQNLEQLGPLQWHSGNAVCVVVAAGGYPGSYRKGDEINGLAEAEAQDVKVFHAGTELKEGKVLTNGGRVLGVTALGKDLSTAIATAYRGVEQIDFDGMYYRRDIGHKAL.

An ATP-grasp domain is found at 109-311 (KQLLIEAGVP…LEKVLMACVE (203 aa)). ATP is bound at residue 135 to 191 (ATKMGAPIVVKADGLAAGKGVIVAQTSAEATTAIAELFDQGFEKIVVEEFLPGEEVS). Glu281 and Asn283 together coordinate Mg(2+).

The protein belongs to the GARS family. It depends on Mg(2+) as a cofactor. The cofactor is Mn(2+).

It catalyses the reaction 5-phospho-beta-D-ribosylamine + glycine + ATP = N(1)-(5-phospho-beta-D-ribosyl)glycinamide + ADP + phosphate + H(+). Its pathway is purine metabolism; IMP biosynthesis via de novo pathway; N(1)-(5-phospho-D-ribosyl)glycinamide from 5-phospho-alpha-D-ribose 1-diphosphate: step 2/2. The sequence is that of Phosphoribosylamine--glycine ligase from Synechocystis sp. (strain ATCC 27184 / PCC 6803 / Kazusa).